Reading from the N-terminus, the 419-residue chain is Copalyl diphosphate synthase 2, chloroplastic (419 aa).

Lys82 contacts substrate.

It belongs to the terpene synthase family. Tpsc subfamily. Requires Mg(2+) as cofactor. In terms of tissue distribution, ubiquitous expression in roots, stems, leaves and flowers.

It is found in the plastid. Its subcellular location is the chloroplast. It catalyses the reaction (2E,6E,10E)-geranylgeranyl diphosphate = (+)-copalyl diphosphate. The protein operates within secondary metabolite biosynthesis; terpenoid biosynthesis. In terms of biological role, involved in the biosynthesis of ent-kaurene diterpenoids natural products such as oridonin, miltiradiene, eriocalyxin B and nezukol, known to exhibit antitumor, anti-inflammatory and antibacterial activities. Catalyzes the conversion of (2E,6E,10E)-geranylgeranyl diphosphate (GGPP) to (+)-copalyl diphosphate ((+)-CPP). The sequence is that of Copalyl diphosphate synthase 2, chloroplastic from Isodon rubescens (Rabdosia rubescens).